Consider the following 93-residue polypeptide: Small ribosomal subunit protein uS19 (93 aa).

Belongs to the universal ribosomal protein uS19 family.

Protein S19 forms a complex with S13 that binds strongly to the 16S ribosomal RNA. In Mycolicibacterium smegmatis (strain ATCC 700084 / mc(2)155) (Mycobacterium smegmatis), this protein is Small ribosomal subunit protein uS19.